Here is a 3135-residue protein sequence, read N- to C-terminus: Gametocyte surface protein P230 (3135 aa).

An N-terminal signal peptide occupies residues 1 to 20 (MKKIITLKNLFLIILVYIFS). 4 N-linked (GlcNAc...) asparagine glycosylation sites follow: Asn-76, Asn-111, Asn-135, and Asn-239. Residues 266–470 (EEDMSPRDNF…EEKDEGGESF (205 aa)) are disordered. Composition is skewed to acidic residues over residues 276–321 (VIDD…EEQL) and 329–345 (VGAE…DEDS). Residues 346 to 358 (VEARDGDMIRVDE) show a composition bias toward basic and acidic residues. Composition is skewed to acidic residues over residues 376 to 444 (DVDE…EGEY) and 458 to 467 (GDEEEKDEGG). Residue Asn-585 is glycosylated (N-linked (GlcNAc...) asparagine). 6-Cys domains are found at residues 589-730 (KEYV…VEPY) and 733-887 (KING…INEE). Intrachain disulfides connect Cys-593/Cys-611, Cys-626/Cys-706, Cys-737/Cys-781, and Cys-804/Cys-862. Residues Asn-821, Asn-829, Asn-889, Asn-961, Asn-1079, Asn-1089, and Asn-1153 are each glycosylated (N-linked (GlcNAc...) asparagine). 6-Cys domains follow at residues 918 to 1133 (HDYT…ISKQ), 1136 to 1275 (KIKG…LKRE), 1285 to 1432 (KIYK…VSKR), and 1435 to 1560 (KVKG…YKKL). 3 disulfide bridges follow: Cys-1140–Cys-1161, Cys-1175–Cys-1251, and Cys-1200–Cys-1249. N-linked (GlcNAc...) asparagine glycans are attached at residues Asn-1267, Asn-1300, Asn-1452, Asn-1492, Asn-1508, Asn-1621, and Asn-1624. 3 cysteine pairs are disulfide-bonded: Cys-1439–Cys-1459, Cys-1473–Cys-1534, and Cys-1483–Cys-1532. 4 6-Cys domains span residues 1694-1907 (NRHV…ISNS), 1910-2035 (KING…LNKD), 2052-2199 (NVHL…VRKN), and 2204-2374 (SFKL…SDNR). 2 cysteine pairs are disulfide-bonded: Cys-1698–Cys-1726 and Cys-1740–Cys-1881. N-linked (GlcNAc...) asparagine glycosylation is found at Asn-1753, Asn-1804, Asn-1882, Asn-1920, Asn-1954, and Asn-1972. 4 disulfides stabilise this stretch: Cys-1914/Cys-1938, Cys-1952/Cys-2017, Cys-1963/Cys-2015, and Cys-2056/Cys-2074. Residues Asn-2178 and Asn-2199 are each glycosylated (N-linked (GlcNAc...) asparagine). Cystine bridges form between Cys-2208–Cys-2229, Cys-2243–Cys-2356, and Cys-2254–Cys-2354. N-linked (GlcNAc...) asparagine glycosylation is found at Asn-2312 and Asn-2351. The disordered stretch occupies residues 2410 to 2432 (IKQQQEEEQQEQILKDQDDRLSR). Basic and acidic residues predominate over residues 2422-2432 (ILKDQDDRLSR). Residues Asn-2439, Asn-2457, Asn-2466, Asn-2504, Asn-2586, Asn-2611, Asn-2650, Asn-2677, and Asn-2688 are each glycosylated (N-linked (GlcNAc...) asparagine). 6-Cys domains are found at residues 2448–2663 (NEHI…ISSN), 2666–2827 (IIHG…IDEK), 2831–2979 (GKDI…INQG), and 2982–3113 (EIHG…PEPQ). 2 cysteine pairs are disulfide-bonded: Cys-2452/Cys-2476 and Cys-2490/Cys-2638. 3 disulfide bridges follow: Cys-2670/Cys-2706, Cys-2720/Cys-2804, and Cys-2730/Cys-2802. N-linked (GlcNAc...) asparagine glycosylation is present at Asn-2952. A disulfide bond links Cys-2986 and Cys-3010. N-linked (GlcNAc...) asparagine glycosylation is found at Asn-3011, Asn-3016, Asn-3066, Asn-3093, and Asn-3096. 2 disulfide bridges follow: Cys-3024–Cys-3090 and Cys-3035–Cys-3088.

In terms of assembly, heterodimer; heterodimerizes with PF45/48. Post-translationally, may be processed into a 310 kDa form as the parasite emerges from the host erythrocytes.

Its subcellular location is the cell surface. It is found in the cell membrane. Functionally, gametocyte surface protein required for male/female gamete fusion. Also required for male gamete exflagellation and interaction with host erythrocytes. The chain is Gametocyte surface protein P230 (PFS230) from Plasmodium falciparum (isolate 3D7).